Reading from the N-terminus, the 488-residue chain is MAAAATATAGTKGVIRQVIGPVLDVEFPAGKLPKILNALRIEGKNPSGQDVAITAEVQQLLGDHRVRAVSMSSTDGLVRGMEALDTGAAISVPVGEATLGRIFNVLGEPVDEQGPVTTDATAPIHRPSPKLTELETKPTVFETGIKVIDLLAPYRQGGKVGLFGGAGVGKTVLIQELINNIAKEHGGVSVFGGVGERTREGNDLYEEFKESGVINSDDLSKSKVALCFGQMNEPPGARMRVGLSALTMAEHFRDVNKQDVLLFIDNIFRFVQAGSEVSALLGRMPSAVGYQPTLGTDVGALQERITSTLEGSITSIQAVYVPADDLTDPAPATTFAHLDATTVLARALAAKGIYPAVDPLDSTSTMLQPSVVGDEHYRTARSVQATLQRYKELQDIIAILGLDELSEDDRRTVDRARKIEKFLSQPFFVAEIFTGMSGKYVKLEETIAGFNMIMSGELDHLPEQAFYLVGNIDEVKAKAEKMASEAKG.

Position 164–171 (164–171 (GGAGVGKT)) interacts with ATP.

This sequence belongs to the ATPase alpha/beta chains family. F-type ATPases have 2 components, CF(1) - the catalytic core - and CF(0) - the membrane proton channel. CF(1) has five subunits: alpha(3), beta(3), gamma(1), delta(1), epsilon(1). CF(0) has four main subunits: a(1), b(1), b'(1) and c(9-12).

The protein localises to the cellular thylakoid membrane. The catalysed reaction is ATP + H2O + 4 H(+)(in) = ADP + phosphate + 5 H(+)(out). Produces ATP from ADP in the presence of a proton gradient across the membrane. The catalytic sites are hosted primarily by the beta subunits. This Prochlorococcus marinus (strain MIT 9313) protein is ATP synthase subunit beta.